An 85-amino-acid polypeptide reads, in one-letter code: Conotoxin Lt28.2 (85 aa).

Positions 1–21 (MPKLEMMLLVLLILPLCYIDA) are cleaved as a signal peptide. Residues 22-40 (VGPPPPWNMEDEIIEHWQK) constitute a propeptide that is removed on maturation.

The protein belongs to the conotoxin D superfamily. In terms of processing, contains 5 disulfide bonds. As to expression, expressed by the venom duct.

It is found in the secreted. Its function is as follows. Probable neurotoxin. This is Conotoxin Lt28.2 from Conus litteratus (Lettered cone).